The primary structure comprises 398 residues: Phosphoglycerate kinase (398 aa).

Substrate is bound by residues 24–26 (DFN), Arg39, 62–65 (HFGR), Arg121, and Arg154. ATP is bound by residues Lys205, Gly296, Glu327, and 354–357 (GGDS).

Belongs to the phosphoglycerate kinase family. As to quaternary structure, monomer.

The protein resides in the cytoplasm. The enzyme catalyses (2R)-3-phosphoglycerate + ATP = (2R)-3-phospho-glyceroyl phosphate + ADP. It participates in carbohydrate degradation; glycolysis; pyruvate from D-glyceraldehyde 3-phosphate: step 2/5. This chain is Phosphoglycerate kinase, found in Trichodesmium erythraeum (strain IMS101).